A 240-amino-acid chain; its full sequence is Large ribosomal subunit protein uL3 (240 aa).

Disordered stretches follow at residues 139–164 and 215–240; these read VSHR…KMPG and DAPK…QEGV. An N5-methylglutamine modification is found at glutamine 151. Residues 225 to 240 are compositionally biased toward low complexity; sequence ADGGEQAAPAAEQEGV.

It belongs to the universal ribosomal protein uL3 family. Part of the 50S ribosomal subunit. Forms a cluster with proteins L14 and L19. Post-translationally, methylated by PrmB.

Its function is as follows. One of the primary rRNA binding proteins, it binds directly near the 3'-end of the 23S rRNA, where it nucleates assembly of the 50S subunit. The chain is Large ribosomal subunit protein uL3 from Rhodopseudomonas palustris (strain BisA53).